Reading from the N-terminus, the 475-residue chain is Ribulose bisphosphate carboxylase large chain (475 aa).

Positions 1-2 (MS) are excised as a propeptide. Pro-3 carries the post-translational modification N-acetylproline. Lys-14 is modified (N6,N6,N6-trimethyllysine). Substrate contacts are provided by Asn-123 and Thr-173. Lys-175 serves as the catalytic Proton acceptor. Lys-177 contributes to the substrate binding site. Positions 201, 203, and 204 each coordinate Mg(2+). Lys-201 is modified (N6-carboxylysine). His-294 serves as the catalytic Proton acceptor. Positions 295, 327, and 379 each coordinate substrate.

Belongs to the RuBisCO large chain family. Type I subfamily. In terms of assembly, heterohexadecamer of 8 large chains and 8 small chains; disulfide-linked. The disulfide link is formed within the large subunit homodimers. Mg(2+) is required as a cofactor. Post-translationally, the disulfide bond which can form in the large chain dimeric partners within the hexadecamer appears to be associated with oxidative stress and protein turnover.

The protein localises to the plastid. The protein resides in the chloroplast. The enzyme catalyses 2 (2R)-3-phosphoglycerate + 2 H(+) = D-ribulose 1,5-bisphosphate + CO2 + H2O. The catalysed reaction is D-ribulose 1,5-bisphosphate + O2 = 2-phosphoglycolate + (2R)-3-phosphoglycerate + 2 H(+). Its function is as follows. RuBisCO catalyzes two reactions: the carboxylation of D-ribulose 1,5-bisphosphate, the primary event in carbon dioxide fixation, as well as the oxidative fragmentation of the pentose substrate in the photorespiration process. Both reactions occur simultaneously and in competition at the same active site. In Buxus microphylla (Littleleaf boxwood), this protein is Ribulose bisphosphate carboxylase large chain.